The sequence spans 146 residues: MRRNDGERHCVQWSRGARKFFGKNPEIIDIPDLIEVQKASYDQFLMMNTAPEDRPNEGLQAAFKSVFPIKAFSGAAMLEFVSYEFDPPKFDVDDCLRRDLTYAVPLKIILRLIVFDVDEFTGAKSIKDIKEQSIYMGDVPLMTKDG.

The protein belongs to the RNA polymerase beta chain family. The RNAP catalytic core consists of 2 alpha, 1 beta, 1 beta' and 1 omega subunit. When a sigma factor is associated with the core the holoenzyme is formed, which can initiate transcription.

It catalyses the reaction RNA(n) + a ribonucleoside 5'-triphosphate = RNA(n+1) + diphosphate. In terms of biological role, DNA-dependent RNA polymerase catalyzes the transcription of DNA into RNA using the four ribonucleoside triphosphates as substrates. This chain is DNA-directed RNA polymerase subunit beta (rpoB), found in Liberibacter africanus (Citrus greening disease).